We begin with the raw amino-acid sequence, 120 residues long: Small ribosomal subunit protein bS16 (120 aa).

The disordered stretch occupies residues 81–120; it reads GLAKRPTRNNPQKAEPGEKAKERAAKRAEKAAAPAEDAAA. Over residues 95 to 110 the composition is skewed to basic and acidic residues; sequence EPGEKAKERAAKRAEK. Low complexity predominate over residues 111–120; that stretch reads AAAPAEDAAA.

Belongs to the bacterial ribosomal protein bS16 family.

The chain is Small ribosomal subunit protein bS16 from Methylorubrum extorquens (strain CM4 / NCIMB 13688) (Methylobacterium extorquens).